Reading from the N-terminus, the 299-residue chain is tRNA-cytidine(32) 2-sulfurtransferase (299 aa).

The PP-loop motif motif lies at 56–61 (SGGKDS). [4Fe-4S] cluster contacts are provided by cysteine 131, cysteine 134, and cysteine 222.

The protein belongs to the TtcA family. As to quaternary structure, homodimer. Mg(2+) is required as a cofactor. It depends on [4Fe-4S] cluster as a cofactor.

Its subcellular location is the cytoplasm. The catalysed reaction is cytidine(32) in tRNA + S-sulfanyl-L-cysteinyl-[cysteine desulfurase] + AH2 + ATP = 2-thiocytidine(32) in tRNA + L-cysteinyl-[cysteine desulfurase] + A + AMP + diphosphate + H(+). It functions in the pathway tRNA modification. Functionally, catalyzes the ATP-dependent 2-thiolation of cytidine in position 32 of tRNA, to form 2-thiocytidine (s(2)C32). The sulfur atoms are provided by the cysteine/cysteine desulfurase (IscS) system. The chain is tRNA-cytidine(32) 2-sulfurtransferase from Xylella fastidiosa (strain M12).